A 138-amino-acid chain; its full sequence is ATP synthase epsilon chain (138 aa).

This sequence belongs to the ATPase epsilon chain family. F-type ATPases have 2 components, CF(1) - the catalytic core - and CF(0) - the membrane proton channel. CF(1) has five subunits: alpha(3), beta(3), gamma(1), delta(1), epsilon(1). CF(0) has three main subunits: a, b and c.

Its subcellular location is the cell inner membrane. Produces ATP from ADP in the presence of a proton gradient across the membrane. The protein is ATP synthase epsilon chain of Cupriavidus pinatubonensis (strain JMP 134 / LMG 1197) (Cupriavidus necator (strain JMP 134)).